The following is a 53-amino-acid chain: uncharacterized protein (53 aa).

The disordered stretch occupies residues 34–53; the sequence is RKEKGKRHAAPLSLMGVHKR.

This is an uncharacterized protein from Treponema pallidum (strain Nichols).